A 904-amino-acid chain; its full sequence is MRQTLPCIYFWGGLLPFGMLCASSTTKCTVSHEVADCSHLKLTQVPDDLPTNITVLNLTHNQLRRLPAANFTRYSQLTSLDVGFNTISKLEPELCQKLPMLKVLNLQHNELSQLSDKTFAFCTNLTELHLMSNSIQKIKNNPFVKQKNLITLDLSHNGLSSTKLGTQVQLENLQELLLSNNKIQALKSEELDIFANSSLKKLELSSNQIKEFSPGCFHAIGRLFGLFLNNVQLGPSLTEKLCLELANTSIRNLSLSNSQLSTTSNTTFLGLKWTNLTMLDLSYNNLNVVGNDSFAWLPQLEYFFLEYNNIQHLFSHSLHGLFNVRYLNLKRSFTKQSISLASLPKIDDFSFQWLKCLEHLNMEDNDIPGIKSNMFTGLINLKYLSLSNSFTSLRTLTNETFVSLAHSPLHILNLTKNKISKIESDAFSWLGHLEVLDLGLNEIGQELTGQEWRGLENIFEIYLSYNKYLQLTRNSFALVPSLQRLMLRRVALKNVDSSPSPFQPLRNLTILDLSNNNIANINDDMLEGLEKLEILDLQHNNLARLWKHANPGGPIYFLKGLSHLHILNLESNGFDEIPVEVFKDLFELKIIDLGLNNLNTLPASVFNNQVSLKSLNLQKNLITSVEKKVFGPAFRNLTELDMRFNPFDCTCESIAWFVNWINETHTNIPELSSHYLCNTPPHYHGFPVRLFDTSSCKDSAPFELFFMINTSILLIFIFIVLLIHFEGWRISFYWNVSVHRVLGFKEIDRQTEQFEYAAYIIHAYKDKDWVWEHFSSMEKEDQSLKFCLEERDFEAGVFELEAIVNSIKRSRKIIFVITHHLLKDPLCKRFKVHHAVQQAIEQNLDSIILVFLEEIPDYKLNHALCLRRGMFKSHCILNWPVQKERIGAFRHKLQVALGSKNSVH.

Residues 1–23 (MRQTLPCIYFWGGLLPFGMLCAS) form the signal peptide. Residues 24-51 (STTKCTVSHEVADCSHLKLTQVPDDLPT) form the LRRNT domain. The Lumenal portion of the chain corresponds to 24 to 704 (STTKCTVSHE…SCKDSAPFEL (681 aa)). C28 and C37 are oxidised to a cystine. N-linked (GlcNAc...) asparagine glycosylation is found at N52, N57, and N70. 6 LRR repeats span residues 52 to 73 (NITV…NFTR), 76 to 97 (QLTS…LCQK), 100 to 121 (MLKV…TFAF), 124 to 145 (NLTE…PFVK), 148 to 168 (NLIT…GTQV), and 172 to 193 (NLQE…ELDI). The cysteines at positions 95 and 122 are disulfide-linked. N-linked (GlcNAc...) asparagine glycosylation occurs at N124. N196 is a glycosylation site (N-linked (GlcNAc...) asparagine). 2 LRR repeats span residues 198–219 (SLKK…CFHA) and 222–244 (RLFG…LCLE). N-linked (GlcNAc...) asparagine glycosylation is found at N247, N252, N265, N275, and N291. LRR repeat units follow at residues 249–270 (SIRN…TFLG), 275–296 (NLTM…SFAW), 299–320 (QLEY…SLHG), 323–344 (NVRY…ASLP), 356–377 (CLEH…MFTG), 380–400 (NLKY…TNET), 408–429 (PLHI…AFSW), 432–454 (HLEV…EWRG), 465–486 (YNKY…QRLM), 507–528 (NLTI…MLEG), 531–552 (KLEI…ANPG), 563–584 (HLHI…VFKD), 587–608 (ELKI…VFNN), and 611–632 (SLKS…VFGP). 2 N-linked (GlcNAc...) asparagine glycosylation sites follow: N398 and N413. N507 carries an N-linked (GlcNAc...) asparagine glycan. N-linked (GlcNAc...) asparagine glycans are attached at residues N636 and N662. In terms of domain architecture, LRRCT spans 645 to 698 (NPFDCTCESIAWFVNWINETHTNIPELSSHYLCNTPPHYHGFPVRLFDTSSCKD). Cystine bridges form between C649–C677 and C651–C696. A helical transmembrane segment spans residues 705 to 725 (FFMINTSILLIFIFIVLLIHF). Residues 726–904 (EGWRISFYWN…VALGSKNSVH (179 aa)) lie on the Cytoplasmic side of the membrane. Residues 754-897 (FEYAAYIIHA…AFRHKLQVAL (144 aa)) form the TIR domain. Y759 carries the post-translational modification Phosphotyrosine. Residues K765, K812, and K831 each participate in a glycyl lysine isopeptide (Lys-Gly) (interchain with G-Cter in ubiquitin) cross-link. Y858 bears the Phosphotyrosine mark.

This sequence belongs to the Toll-like receptor family. Monomer and homodimer; dimerization is triggered by ligand-binding, the signaling unit is composed of one ds-RNA of around 40 bp and two TLR3 molecules, and lateral clustering of signaling units along the length of the ds-RNA ligand is required for TLR3 signal transduction. Interacts (via transmembrane domain) with UNC93B1; the interaction is required for transport from the ER to the endosomes. Interacts with SRC; upon binding of double-stranded RNA. Interacts with TICAM1 (via the TIR domain) in response to poly(I:C) and this interaction is enhanced in the presence of WDFY1. The tyrosine-phosphorylated form (via TIR domain) interacts with WDFY1 (via WD repeat 2) in response to poly(I:C). Heavily N-glycosylated, except on that part of the surface of the ectodomain that is involved in ligand binding. In terms of processing, TLR3 signaling requires a proteolytic cleavage mediated by cathepsins CTSB and CTSH, the cleavage occurs between amino acids 252 and 346. The cleaved form of TLR3 is the predominant form found in endosomes. Post-translationally, ubiquitinated by TRIM3; leading to recognition and sorting of polyubiquitinated TLR3 by the ESCRT complexes. Ubiquitinated by ZNRF1 via 'Lys-63'-linked ubiquitin chains; leading to TLR3 lysosomal trafficking and degradation. Ubiquitinated by RNF170 at Lys-765 via 'Lys-48'-linked ubiquitin chains; leading to TLR3 proteasomal degradation. As to expression, expressed at high level in placenta and pancreas. Also detected in CD11c+ immature dendritic cells. Only expressed in dendritic cells and not in other leukocytes, including monocyte precursors. TLR3 is the TLR that is expressed most strongly in the brain, especially in astrocytes, glia, and neurons.

It localises to the endoplasmic reticulum membrane. It is found in the endosome membrane. The protein localises to the early endosome. Functionally, key component of innate and adaptive immunity. TLRs (Toll-like receptors) control host immune response against pathogens through recognition of molecular patterns specific to microorganisms. TLR3 is a nucleotide-sensing TLR which is activated by double-stranded RNA, a sign of viral infection. Acts via the adapter TRIF/TICAM1, leading to NF-kappa-B activation, IRF3 nuclear translocation, cytokine secretion and the inflammatory response. This is Toll-like receptor 3 from Homo sapiens (Human).